The primary structure comprises 140 residues: Nucleoside diphosphate kinase (140 aa).

ATP is bound by residues K11, F59, R87, T93, R104, and N114. The active-site Pros-phosphohistidine intermediate is the H117.

It belongs to the NDK family. Homotetramer. It depends on Mg(2+) as a cofactor.

It is found in the cytoplasm. The catalysed reaction is a 2'-deoxyribonucleoside 5'-diphosphate + ATP = a 2'-deoxyribonucleoside 5'-triphosphate + ADP. It catalyses the reaction a ribonucleoside 5'-diphosphate + ATP = a ribonucleoside 5'-triphosphate + ADP. Functionally, major role in the synthesis of nucleoside triphosphates other than ATP. The ATP gamma phosphate is transferred to the NDP beta phosphate via a ping-pong mechanism, using a phosphorylated active-site intermediate. This is Nucleoside diphosphate kinase from Cereibacter sphaeroides (strain ATCC 17025 / ATH 2.4.3) (Rhodobacter sphaeroides).